The chain runs to 124 residues: UPF0231 protein Shewmr7_3366 (124 aa).

It belongs to the UPF0231 family.

This is UPF0231 protein Shewmr7_3366 from Shewanella sp. (strain MR-7).